The chain runs to 222 residues: Peptide methionine sulfoxide reductase MsrA (222 aa).

Residue Cys60 is part of the active site.

The protein belongs to the MsrA Met sulfoxide reductase family.

The catalysed reaction is L-methionyl-[protein] + [thioredoxin]-disulfide + H2O = L-methionyl-(S)-S-oxide-[protein] + [thioredoxin]-dithiol. It carries out the reaction [thioredoxin]-disulfide + L-methionine + H2O = L-methionine (S)-S-oxide + [thioredoxin]-dithiol. Functionally, has an important function as a repair enzyme for proteins that have been inactivated by oxidation. Catalyzes the reversible oxidation-reduction of methionine sulfoxide in proteins to methionine. The protein is Peptide methionine sulfoxide reductase MsrA of Pseudomonas putida (strain GB-1).